A 132-amino-acid polypeptide reads, in one-letter code: Large ribosomal subunit protein uL14 (132 aa).

This sequence belongs to the universal ribosomal protein uL14 family. As to quaternary structure, the L3/L14/L24e cluster may contact the 16S rRNA in 2 intersubunit bridges. Part of the 50S ribosomal subunit. Forms a cluster with proteins L3 and L24e.

Forms part of two intersubunit bridges in the 70S ribosome. Binds to 23S rRNA. This is Large ribosomal subunit protein uL14 from Haloarcula marismortui (strain ATCC 43049 / DSM 3752 / JCM 8966 / VKM B-1809) (Halobacterium marismortui).